Here is a 555-residue protein sequence, read N- to C-terminus: Putative outer capsid protein p10 (555 aa).

It localises to the virion. This is Putative outer capsid protein p10 (S10) from Saccharum officinarum (Sugarcane).